Reading from the N-terminus, the 78-residue chain is Exodeoxyribonuclease 7 small subunit (78 aa).

This sequence belongs to the XseB family. Heterooligomer composed of large and small subunits.

It localises to the cytoplasm. The enzyme catalyses Exonucleolytic cleavage in either 5'- to 3'- or 3'- to 5'-direction to yield nucleoside 5'-phosphates.. Bidirectionally degrades single-stranded DNA into large acid-insoluble oligonucleotides, which are then degraded further into small acid-soluble oligonucleotides. The protein is Exodeoxyribonuclease 7 small subunit of Nocardia farcinica (strain IFM 10152).